A 460-amino-acid chain; its full sequence is 3-isopropylmalate dehydratase large subunit (460 aa).

The [4Fe-4S] cluster site is built by C338, C398, and C401.

It belongs to the aconitase/IPM isomerase family. LeuC type 1 subfamily. As to quaternary structure, heterodimer of LeuC and LeuD. It depends on [4Fe-4S] cluster as a cofactor.

The enzyme catalyses (2R,3S)-3-isopropylmalate = (2S)-2-isopropylmalate. It functions in the pathway amino-acid biosynthesis; L-leucine biosynthesis; L-leucine from 3-methyl-2-oxobutanoate: step 2/4. In terms of biological role, catalyzes the isomerization between 2-isopropylmalate and 3-isopropylmalate, via the formation of 2-isopropylmaleate. The polypeptide is 3-isopropylmalate dehydratase large subunit (Streptococcus thermophilus (strain CNRZ 1066)).